The following is a 422-amino-acid chain: MAADKPHMNLAVIGHIDHGKSTLVGRLMYEAGAVPAHIIEKYKEEAKQKGKESFAFAWVMDSLKEERERGITIDIAHKRFDTPKYYFTVVDCPGHRDFVKNMITGASQADAAILVVAAPDGVMAQTKEHIFLSRTLGINQLIIAINKMDAVEYSEAKYKEVVEQVSGLLKMIGFKPANIPFIPTSAFMGDNITKLSEKTPWYKGPVIMQALDELKEPEKPSTLPLRIPVEDAYTISGIGTVPVGRVETGVMKKGDKVIFMPGGAGGEVKSIEMHHEEIPQAYPGDNIGWNVRGIGKNDVRRGDVCGHTDNPPKVADEFVGQIVVLQHPSAITAGYTPVFHAHTSQIACQLISLDKKLDPKTGQVKEEHPTFIKAGDAAIVTIKPTKPMVIEPVKEIPQLGRFAIRDMGMTIAAGMCMSVKQK.

A tr-type G domain is found at 5–221; that stretch reads KPHMNLAVIG…DELKEPEKPS (217 aa). The interval 14–21 is G1; that stretch reads GHIDHGKS. A GTP-binding site is contributed by 14-21; that stretch reads GHIDHGKS. Residue serine 21 coordinates Mg(2+). The G2 stretch occupies residues 70–74; that stretch reads GITID. The segment at 91 to 94 is G3; it reads DCPG. Residues 91–95 and 146–149 each bind GTP; these read DCPGH and NKMD. The interval 146–149 is G4; sequence NKMD. Positions 185-187 are G5; that stretch reads SAF.

Belongs to the TRAFAC class translation factor GTPase superfamily. Classic translation factor GTPase family. EF-Tu/EF-1A subfamily.

The protein resides in the cytoplasm. It catalyses the reaction GTP + H2O = GDP + phosphate + H(+). Functionally, GTP hydrolase that promotes the GTP-dependent binding of aminoacyl-tRNA to the A-site of ribosomes during protein biosynthesis. This chain is Elongation factor 1-alpha, found in Methanosarcina acetivorans (strain ATCC 35395 / DSM 2834 / JCM 12185 / C2A).